The sequence spans 810 residues: Protein kinase C-binding protein NELL1 (810 aa).

The signal sequence occupies residues 1 to 21; that stretch reads MPMDVILVLWFCVCTARTVLG. N-linked (GlcNAc...) asparagine glycans are attached at residues N40, N53, N83, N224, N294, and N372. In terms of domain architecture, Laminin G-like spans 57-227; that stretch reads AFLFQDVQRE…TQCPNLNRTC (171 aa). The VWFC 1 domain occupies 271-332; sequence KTCQVSGLLY…ISGQCCKVCR (62 aa). Cystine bridges form between C395/C407, C401/C416, and C418/C432. Residues D434, I435, and E437 each contribute to the Ca(2+) site. Residues 434–475 form the EGF-like 1; calcium-binding domain; the sequence is DIDECAAKMHYCHANTVCVNLPGLYRCDCVPGYIRVDDFSCT. Intrachain disulfides connect C438–C451, C445–C460, C462–C474, C480–C493, C487–C502, C504–C515, C519–C529, C523–C535, C537–C546, C553–C566, C560–C575, C577–C594, C600–C613, C607–C622, and C624–C630. Residues N453, L454, and L457 each contribute to the Ca(2+) site. The 41-residue stretch at 476–516 folds into the EGF-like 2; calcium-binding domain; sequence EHDDCGSGQHNCDKNAICTNTVQGHSCTCQPGYVGNGTICK. The N-linked (GlcNAc...) asparagine glycan is linked to N511. Residues 517–547 enclose the EGF-like 3 domain; sequence AFCEEGCRYGGTCVAPNKCVCPSGFTGSHCE. An EGF-like 4; calcium-binding domain is found at 549-587; sequence DIDECAEGFVECHNHSRCVNLPGWYHCECRSGFHDDGTY. N562 carries an N-linked (GlcNAc...) asparagine glycan. One can recognise an EGF-like 5; calcium-binding domain in the interval 596–631; it reads DIDECALRTHTCWNDSACINLAGGFDCLCPSGPSCS. N609 carries N-linked (GlcNAc...) asparagine glycosylation. VWFC domains follow at residues 632–687 and 692–750; these read GDCP…PECD and SQCL…PRCV. An N-linked (GlcNAc...) asparagine glycan is attached at N708.

In terms of assembly, interacts with ATRAID; the interaction promotes osteoblast cell differentiation and mineralization. Homotrimer. Binds to PKC beta-1. Interacts with ROBO3.

It is found in the cytoplasm. The protein localises to the nucleus envelope. It localises to the secreted. Plays a role in the control of cell growth and differentiation. Promotes osteoblast cell differentiation and terminal mineralization. The protein is Protein kinase C-binding protein NELL1 (Nell1) of Rattus norvegicus (Rat).